Reading from the N-terminus, the 368-residue chain is Isopentenyl-diphosphate delta-isomerase (368 aa).

Residue 7 to 8 (RK) participates in substrate binding. FMN-binding positions include Thr-65, 66–68 (GMT), Ser-96, and Asn-125. 96–98 (SQR) lines the substrate pocket. Position 160 (Gln-160) interacts with substrate. Glu-161 is a Mg(2+) binding site. FMN is bound by residues Lys-193, Ser-218, Thr-223, 275–277 (GIR), and 296–297 (AL).

It belongs to the IPP isomerase type 2 family. In terms of assembly, homooctamer. Dimer of tetramers. Requires FMN as cofactor. NADPH is required as a cofactor. It depends on Mg(2+) as a cofactor.

Its subcellular location is the cytoplasm. The catalysed reaction is isopentenyl diphosphate = dimethylallyl diphosphate. In terms of biological role, involved in the biosynthesis of isoprenoids. Catalyzes the 1,3-allylic rearrangement of the homoallylic substrate isopentenyl (IPP) to its allylic isomer, dimethylallyl diphosphate (DMAPP). The sequence is that of Isopentenyl-diphosphate delta-isomerase from Saccharolobus islandicus (strain M.16.27) (Sulfolobus islandicus).